A 586-amino-acid polypeptide reads, in one-letter code: Probable lysosomal cobalamin transporter (586 aa).

A run of 9 helical transmembrane segments spans residues I10–F30, V47–V67, I96–A116, S147–G167, A191–T211, L315–T335, I378–V398, I420–M440, and V509–L529. N540 carries N-linked (GlcNAc...) asparagine glycosylation.

It belongs to the LIMR family. LMBRD1 subfamily.

The protein resides in the lysosome membrane. Functionally, probable lysosomal cobalamin transporter. Required to export cobalamin from lysosomes allowing its conversion to cofactors. In Pyricularia oryzae (strain 70-15 / ATCC MYA-4617 / FGSC 8958) (Rice blast fungus), this protein is Probable lysosomal cobalamin transporter.